We begin with the raw amino-acid sequence, 199 residues long: Holliday junction branch migration complex subunit RuvA (199 aa).

The domain I stretch occupies residues 1–63 (MIGCLIGEVF…EDAQQLYGFS (63 aa)). Residues 64–142 (DAQEKTIFRT…TLAQGTSSAA (79 aa)) are domain II. Residues 143 to 150 (ALPQIQFV) are flexible linker. The segment at 150-199 (VSNSPVAEAEAALQSLGYKPLEAQKAVAAVKADYTESADIIRAALKSMMK) is domain III.

Belongs to the RuvA family. As to quaternary structure, homotetramer. Forms an RuvA(8)-RuvB(12)-Holliday junction (HJ) complex. HJ DNA is sandwiched between 2 RuvA tetramers; dsDNA enters through RuvA and exits via RuvB. An RuvB hexamer assembles on each DNA strand where it exits the tetramer. Each RuvB hexamer is contacted by two RuvA subunits (via domain III) on 2 adjacent RuvB subunits; this complex drives branch migration. In the full resolvosome a probable DNA-RuvA(4)-RuvB(12)-RuvC(2) complex forms which resolves the HJ.

Its subcellular location is the cytoplasm. In terms of biological role, the RuvA-RuvB-RuvC complex processes Holliday junction (HJ) DNA during genetic recombination and DNA repair, while the RuvA-RuvB complex plays an important role in the rescue of blocked DNA replication forks via replication fork reversal (RFR). RuvA specifically binds to HJ cruciform DNA, conferring on it an open structure. The RuvB hexamer acts as an ATP-dependent pump, pulling dsDNA into and through the RuvAB complex. HJ branch migration allows RuvC to scan DNA until it finds its consensus sequence, where it cleaves and resolves the cruciform DNA. This chain is Holliday junction branch migration complex subunit RuvA, found in Acinetobacter baumannii (strain SDF).